A 395-amino-acid polypeptide reads, in one-letter code: Pesticidal crystal protein Cry6Ba (395 aa).

The protein belongs to the cry6A endotoxin family.

Functionally, endotoxin with nematicidal activity. The chain is Pesticidal crystal protein Cry6Ba (cry6Ba) from Bacillus thuringiensis.